Here is a 1883-residue protein sequence, read N- to C-terminus: Chromodomain-helicase-DNA-binding protein 1 (1883 aa).

Positions 1–14 are enriched in polar residues; that stretch reads MSQALNESANSIGS. A disordered region spans residues 1–293; the sequence is MSQALNESAN…SEDEATDSED (293 aa). Over residues 39–56 the composition is skewed to low complexity; it reads SGSDSDSDSSSGNSSDGR. Residues 114–128 are compositionally biased toward polar residues; that stretch reads QRNQSINNANTSSSL. Low complexity predominate over residues 159–172; it reads DSSANVSPTSSSSS. Positions 213-226 are enriched in acidic residues; the sequence is SDESDESEDSDDEV. The span at 236–247 shows a compositional bias: polar residues; sequence ATTSRSKLAQQQ. Over residues 284-293 the composition is skewed to acidic residues; the sequence is SEDEATDSED. 2 consecutive Chromo domains span residues 318 to 414 and 439 to 501; these read ETIE…YWRR and NNVD…TPSR. One can recognise a Helicase ATP-binding domain in the interval 540–710; sequence LHSWCKENSV…WALLHFIMPD (171 aa). 553 to 560 is a binding site for ATP; it reads DEMGLGKT. Positions 661-664 match the DEAH box motif; sequence DEAH. Residues 840 to 991 form the Helicase C-terminal domain; it reads LLDKLLCRLK…HLVIQRMDTT (152 aa). 5 disordered regions span residues 1074 to 1185, 1246 to 1265, 1390 to 1491, 1599 to 1829, and 1848 to 1883; these read FEEE…MKEK, HKEE…AKQR, TKGG…MHFT, KAGG…PYSS, and PPPS…RTQT. Acidic residues predominate over residues 1091–1103; that stretch reads GEEDDSKDWDDII. The segment covering 1106 to 1121 has biased composition (basic and acidic residues); the sequence is GFRKAIDDQERAKEME. The segment covering 1393–1402 has biased composition (basic residues); sequence GQRRQRRPRA. Positions 1437-1451 are enriched in polar residues; that stretch reads AESSNSQVDPSTASP. Basic residues predominate over residues 1466-1476; it reads KAKKSKARSKK. The tract at residues 1505-1606 is CHD1 helical C-terminal domain (CHCT); sequence LDPSIFNECK…KQKAGGDGEA (102 aa). The span at 1600–1612 shows a compositional bias: basic and acidic residues; that stretch reads AGGDGEAKGKDKG. The segment covering 1613 to 1622 has biased composition (low complexity); that stretch reads SSGSPAKSKP. Over residues 1627–1638 the composition is skewed to basic and acidic residues; the sequence is TEEKEKERDRSG. Over residues 1724 to 1738 the composition is skewed to gly residues; the sequence is YYGGSGPPMGSGSYE. Positions 1742–1755 are enriched in polar residues; it reads NSRRQGPTSPSTPR. Composition is skewed to basic and acidic residues over residues 1773–1794, 1805–1817, and 1868–1883; these read EMER…RYDG, YHRE…EKRR, and YPAD…RTQT.

This sequence belongs to the SNF2/RAD54 helicase family. As to quaternary structure, monomer. Component of the SAGA complex. Interacts with SSRP1.

It is found in the nucleus. Its subcellular location is the chromosome. It carries out the reaction ATP + H2O = ADP + phosphate + H(+). Its function is as follows. ATP-dependent chromatin-remodeling factor which functions as substrate recognition component of the transcription regulatory histone acetylation (HAT) complex SAGA. Regulates polymerase II transcription. Also required for efficient transcription by RNA polymerase I, and more specifically the polymerase I transcription termination step. Regulates negatively DNA replication. Not only involved in transcription-related chromatin remodeling, but also required to maintain a specific chromatin configuration across the genome. Involved in assembly of active chromatin. Required for maintaining open chromatin and pluripotency in embryonic stem cells and is important for wing development and fertility. Is essential for the incorporation of histone H3.3 and assembly of paternal chromatin. Required for replication-independent nucleosome assembly in the decondensing male pronucleus. This chain is Chromodomain-helicase-DNA-binding protein 1 (Chd1), found in Drosophila melanogaster (Fruit fly).